A 214-amino-acid chain; its full sequence is MSSLATLLVLSDSRLPTGGHVHSGGVEEAVSSGLVVDLATLRAYLTRRIRTSGLVTASLAAAVHRGSLPAAAGEAGDAETDARTPSPAARAASRAQGRGLVRLARRVWPEQDWDGLGATPHLAVAAGVAGRAGGLAPDHTALSVVYTTMTGSATAAQRLLALDPGDVAAVTFALSPLCEHTAAEAAKELADLSDPLLDVLAQRHLERERPLFAS.

A disordered region spans residues 70–95 (AAAGEAGDAETDARTPSPAARAASRA). Residues 83–95 (RTPSPAARAASRA) are compositionally biased toward low complexity.

Belongs to the UreF family. UreD, UreF and UreG form a complex that acts as a GTP-hydrolysis-dependent molecular chaperone, activating the urease apoprotein by helping to assemble the nickel containing metallocenter of UreC. The UreE protein probably delivers the nickel.

It is found in the cytoplasm. Required for maturation of urease via the functional incorporation of the urease nickel metallocenter. The chain is Urease accessory protein UreF from Mycolicibacterium vanbaalenii (strain DSM 7251 / JCM 13017 / BCRC 16820 / KCTC 9966 / NRRL B-24157 / PYR-1) (Mycobacterium vanbaalenii).